A 376-amino-acid polypeptide reads, in one-letter code: Protein XRP2 (376 aa).

The disordered stretch occupies residues Met1–Asp55. Gly2 carries the N-myristoyl glycine lipid modification. The S-palmitoyl cysteine moiety is linked to residue Cys3. Over residues Glu25–Ala48 the composition is skewed to polar residues. A C-CAP/cofactor C-like domain is found at Pro49–Pro204. GTP-binding positions include Gly123–Ser124 and Gln140–Arg143.

Belongs to the TBCC family. In terms of processing, myristoylated on Gly-2; which may be required for membrane targeting. Post-translationally, palmitoylated on Cys-3; which may be required for plasma membrane targeting. In the retina, detected in both rod and cone photoreceptors (at protein level). Has strongest expression in the retinal outer nuclear layer (ONL) and weaker expression in the outer plexiform layer (OPL) and inner plexiform layer (IPL) (at protein level). Expressed in all tissues tested.

The protein resides in the cell membrane. It localises to the cell projection. Its subcellular location is the cilium. In terms of biological role, acts as a GTPase-activating protein (GAP) involved in trafficking between the Golgi and the ciliary membrane. Acts as a GTPase-activating protein (GAP) for tubulin in concert with tubulin-specific chaperone C, but does not enhance tubulin heterodimerization. In the retina, required for maintenance of rod and cone photoreceptor cells. May have a role in normal retinal localization of the transducins GNB1 and GNAT1, and the rhodopsin kinase GRK1. The polypeptide is Protein XRP2 (Danio rerio (Zebrafish)).